Consider the following 446-residue polypeptide: Tol-Pal system protein TolB (446 aa).

Residues 1–43 (MRKLWAPNWLSRRQNANPTRDQSRHALMAWLAAALMSAGAAHA) form the signal peptide.

The protein belongs to the TolB family. As to quaternary structure, the Tol-Pal system is composed of five core proteins: the inner membrane proteins TolA, TolQ and TolR, the periplasmic protein TolB and the outer membrane protein Pal. They form a network linking the inner and outer membranes and the peptidoglycan layer.

The protein localises to the periplasm. Part of the Tol-Pal system, which plays a role in outer membrane invagination during cell division and is important for maintaining outer membrane integrity. This is Tol-Pal system protein TolB from Cupriavidus metallidurans (strain ATCC 43123 / DSM 2839 / NBRC 102507 / CH34) (Ralstonia metallidurans).